A 256-amino-acid chain; its full sequence is Thiazole synthase (256 aa).

Residue K95 is the Schiff-base intermediate with DXP of the active site. 1-deoxy-D-xylulose 5-phosphate is bound by residues G156, 182–183 (AG), and 204–205 (NT).

The protein belongs to the ThiG family. In terms of assembly, homotetramer. Forms heterodimers with either ThiH or ThiS.

Its subcellular location is the cytoplasm. The enzyme catalyses [ThiS sulfur-carrier protein]-C-terminal-Gly-aminoethanethioate + 2-iminoacetate + 1-deoxy-D-xylulose 5-phosphate = [ThiS sulfur-carrier protein]-C-terminal Gly-Gly + 2-[(2R,5Z)-2-carboxy-4-methylthiazol-5(2H)-ylidene]ethyl phosphate + 2 H2O + H(+). It participates in cofactor biosynthesis; thiamine diphosphate biosynthesis. Functionally, catalyzes the rearrangement of 1-deoxy-D-xylulose 5-phosphate (DXP) to produce the thiazole phosphate moiety of thiamine. Sulfur is provided by the thiocarboxylate moiety of the carrier protein ThiS. In vitro, sulfur can be provided by H(2)S. In Salmonella agona (strain SL483), this protein is Thiazole synthase.